The chain runs to 131 residues: uncharacterized protein (131 aa).

3 helical membrane-spanning segments follow: residues 13–35 (RFIKFVFPFPATGIYFHGYTFPI), 60–79 (LVALPILMLQPSMYVCTYVC), and 100–119 (LFEIVLYYLSVCTPYWWNIT).

It is found in the membrane. This is an uncharacterized protein from Saccharomyces cerevisiae (strain ATCC 204508 / S288c) (Baker's yeast).